A 428-amino-acid chain; its full sequence is Dihydroorotase (428 aa).

Positions 61 and 63 each coordinate Zn(2+). Substrate is bound by residues 63–65 (HLR) and Asn-95. 3 residues coordinate Zn(2+): Asp-153, His-180, and His-233. Asn-279 is a substrate binding site. Asp-306 provides a ligand contact to Zn(2+). The active site involves Asp-306. Substrate is bound by residues His-310 and 324 to 325 (FG).

This sequence belongs to the metallo-dependent hydrolases superfamily. DHOase family. Class I DHOase subfamily. Zn(2+) is required as a cofactor.

It carries out the reaction (S)-dihydroorotate + H2O = N-carbamoyl-L-aspartate + H(+). It participates in pyrimidine metabolism; UMP biosynthesis via de novo pathway; (S)-dihydroorotate from bicarbonate: step 3/3. Its function is as follows. Catalyzes the reversible cyclization of carbamoyl aspartate to dihydroorotate. This chain is Dihydroorotase, found in Geobacillus kaustophilus (strain HTA426).